Consider the following 506-residue polypeptide: Maturase K (506 aa).

Belongs to the intron maturase 2 family. MatK subfamily.

It is found in the plastid. The protein resides in the chloroplast. Usually encoded in the trnK tRNA gene intron. Probably assists in splicing its own and other chloroplast group II introns. The chain is Maturase K from Trifolium resupinatum (Persian clover).